A 483-amino-acid chain; its full sequence is Bifunctional pantoate ligase/cytidylate kinase (483 aa).

The pantoate--beta-alanine ligase stretch occupies residues 1–246 (MPTMGALHAG…CGSTRLIDHA (246 aa)). 4-11 (MGALHAGH) provides a ligand contact to ATP. Histidine 11 (proton donor) is an active-site residue. Glutamine 34 serves as a coordination point for (R)-pantoate. Glutamine 34 lines the beta-alanine pocket. 124–127 (GEKD) provides a ligand contact to ATP. Glutamine 130 provides a ligand contact to (R)-pantoate. ATP-binding positions include valine 153 and 161-164 (LSSR). Residues 247–483 (FLMTRQPLVA…AEEAWPTPQR (237 aa)) are cytidylate kinase.

In the N-terminal section; belongs to the pantothenate synthetase family. The protein in the C-terminal section; belongs to the cytidylate kinase family. Type 1 subfamily.

Its subcellular location is the cytoplasm. It catalyses the reaction (R)-pantoate + beta-alanine + ATP = (R)-pantothenate + AMP + diphosphate + H(+). The enzyme catalyses CMP + ATP = CDP + ADP. It carries out the reaction dCMP + ATP = dCDP + ADP. It functions in the pathway cofactor biosynthesis; (R)-pantothenate biosynthesis; (R)-pantothenate from (R)-pantoate and beta-alanine: step 1/1. Its function is as follows. Catalyzes the condensation of pantoate with beta-alanine in an ATP-dependent reaction via a pantoyl-adenylate intermediate. Catalyzes the transfer of a phosphate group from ATP to either CMP or dCMP to form CDP or dCDP and ADP, respectively. This Synechococcus sp. (strain CC9902) protein is Bifunctional pantoate ligase/cytidylate kinase.